Here is a 142-residue protein sequence, read N- to C-terminus: Putative pre-16S rRNA nuclease (142 aa).

Belongs to the YqgF nuclease family.

The protein resides in the cytoplasm. Its function is as follows. Could be a nuclease involved in processing of the 5'-end of pre-16S rRNA. The protein is Putative pre-16S rRNA nuclease of Desulfitobacterium hafniense (strain DSM 10664 / DCB-2).